Here is a 170-residue protein sequence, read N- to C-terminus: Peptide deformylase 2 (170 aa).

Residues C94 and H136 each contribute to the Fe cation site. The active site involves E137. Fe cation is bound at residue H140.

Belongs to the polypeptide deformylase family. Fe(2+) serves as cofactor.

The catalysed reaction is N-terminal N-formyl-L-methionyl-[peptide] + H2O = N-terminal L-methionyl-[peptide] + formate. Removes the formyl group from the N-terminal Met of newly synthesized proteins. Requires at least a dipeptide for an efficient rate of reaction. N-terminal L-methionine is a prerequisite for activity but the enzyme has broad specificity at other positions. The sequence is that of Peptide deformylase 2 from Xanthomonas axonopodis pv. citri (strain 306).